A 741-amino-acid polypeptide reads, in one-letter code: MQRNRIAKSVLAALAVIAMSAGSISARADGAPRANGFWWPETLDLSPLRQHDVESNPYGKDFDYAQAFQKLDIEAVKKDIRTTLTTSQDWWPADYGNYGPFFIRMAWHGAGTYRTYDGRGGAGGAQQRFEPLNSWPDNANLDKARRLLWPIKKKYGQNISWGDLMVLTGNVALESMGFQTFGFGGGREDDWQSDLVYWGAGPKFMSNNRDKNGKLEKPLAATQMGLIYVNPEGPNGNPDPVAAAQDIREAFGRMAMNDEETLALIAGGHTFGKAHGAASPDKCVGVAPAGAGVEAQGLGWANKCGTGKGVDTITSGLEGAWSVDPVHFTMQYLDNLLGHDWVLTKSPAGAHQWMPKDAQSIVPDAHDPSKLHPLMMFTTDIALKVDPAYSKIAKRFEEHPDEFKLAFAKAWFKLTHRDLGPKARYLGKDVPKVDLIWQDPLPVAGYQTIGAADIADLKSRILASGLPKSELIKTAWASAASFRGTDYRGGANGARIRLAPENGWAVNDPASVAKVLKSLEAIQSGFNKGRTDGKQVSLADLIVLGGSAAVEDAARKAGYDITVPFAPGRVDATQAQTDVASFAVLEPTADGFRNYYQKGNERSPAELLVDRASKLDLTVPEMTVLVGGLRALDANTGHSKLGVLTNHPGTLSNEFFVNLLDMSTEWKKSPSADGTYEGRDRKTGALRWTASPVDLVFGSSSELRAVAEVYASDDAHEKFVRDFVAAWTKVMNLDRFDLKRI.

The N-terminal stretch at 1–28 is a signal peptide; the sequence is MQRNRIAKSVLAALAVIAMSAGSISARA. The tryptophyl-tyrosyl-methioninium (Trp-Tyr) (with M-254) cross-link spans 107–228; that stretch reads WHGAGTYRTY…LAATQMGLIY (122 aa). The active-site Proton acceptor is H108. The segment at residues 228-254 is a cross-link (tryptophyl-tyrosyl-methioninium (Tyr-Met) (with W-107)); sequence YVNPEGPNGNPDPVAAAQDIREAFGRM. H269 contacts heme b.

The protein belongs to the peroxidase family. Peroxidase/catalase subfamily. As to quaternary structure, homodimer or homotetramer. The cofactor is heme b. In terms of processing, formation of the three residue Trp-Tyr-Met cross-link is important for the catalase, but not the peroxidase activity of the enzyme.

The enzyme catalyses H2O2 + AH2 = A + 2 H2O. It carries out the reaction 2 H2O2 = O2 + 2 H2O. Its function is as follows. Bifunctional enzyme with both catalase and broad-spectrum peroxidase activity. In Burkholderia vietnamiensis (strain G4 / LMG 22486) (Burkholderia cepacia (strain R1808)), this protein is Catalase-peroxidase 2.